A 921-amino-acid chain; its full sequence is Alanine--tRNA ligase (921 aa).

The Zn(2+) site is built by histidine 602, histidine 606, cysteine 706, and histidine 710.

It belongs to the class-II aminoacyl-tRNA synthetase family. The cofactor is Zn(2+).

It localises to the cytoplasm. The catalysed reaction is tRNA(Ala) + L-alanine + ATP = L-alanyl-tRNA(Ala) + AMP + diphosphate. Functionally, catalyzes the attachment of alanine to tRNA(Ala) in a two-step reaction: alanine is first activated by ATP to form Ala-AMP and then transferred to the acceptor end of tRNA(Ala). Also edits incorrectly charged Ser-tRNA(Ala) and Gly-tRNA(Ala) via its editing domain. In Hyperthermus butylicus (strain DSM 5456 / JCM 9403 / PLM1-5), this protein is Alanine--tRNA ligase.